The following is a 601-amino-acid chain: Glutathione-regulated potassium-efflux system protein KefB (601 aa).

13 helical membrane passes run 4 to 24, 29 to 49, 55 to 75, 87 to 107, 115 to 135, 152 to 172, 177 to 197, 207 to 227, 230 to 250, 268 to 288, 291 to 311, 324 to 344, and 356 to 376; these read SDFL…VPLA, IGAV…GLGF, EILH…GLEL, IFGV…GLLM, AAVV…LQLM, VLLF…LLAG, HFDW…LIGG, FIAA…LVLG, LFMD…GVLL, GLLL…GVLY, LLWV…VLYL, MQFA…FSTA, and ALLL…MKLV. Positions 400–519 constitute an RCK N-terminal domain; sequence KPQVIVVGFG…AGVTQFSRET (120 aa).

Belongs to the monovalent cation:proton antiporter 2 (CPA2) transporter (TC 2.A.37) family. KefB subfamily. As to quaternary structure, interacts with the regulatory subunit KefG.

Its subcellular location is the cell inner membrane. In terms of biological role, pore-forming subunit of a potassium efflux system that confers protection against electrophiles. Catalyzes K(+)/H(+) antiport. The protein is Glutathione-regulated potassium-efflux system protein KefB of Escherichia coli O17:K52:H18 (strain UMN026 / ExPEC).